An 824-amino-acid polypeptide reads, in one-letter code: Probable ion channel POLLUX (824 aa).

A compositionally biased stretch (low complexity) spans 45–54 (DGDDSSNLPT). Residues 45 to 70 (DGDDSSNLPTVPNPEEKPVPVPSQSP) form a disordered region. The next 4 membrane-spanning stretches (helical) occupy residues 81 to 101 (FSLT…VMFL), 135 to 155 (AVVF…YMYL), 198 to 218 (LALL…LYAV), and 250 to 270 (IVSV…LGLI). RCK N-terminal domains are found at residues 291–432 (SNHI…ETVV) and 550–699 (PEKI…DKSI). The stretch at 325-346 (LAERDKEEMETDIAKFEFDLMG) forms a coiled coil.

It belongs to the castor/pollux (TC 1.A.1.23) family.

The protein resides in the nucleus membrane. The sequence is that of Probable ion channel POLLUX from Arabidopsis thaliana (Mouse-ear cress).